The primary structure comprises 102 residues: Small ribosomal subunit protein uS10 (102 aa).

The protein belongs to the universal ribosomal protein uS10 family. As to quaternary structure, part of the 30S ribosomal subunit.

In terms of biological role, involved in the binding of tRNA to the ribosomes. The polypeptide is Small ribosomal subunit protein uS10 (Salinispora tropica (strain ATCC BAA-916 / DSM 44818 / JCM 13857 / NBRC 105044 / CNB-440)).